The following is a 132-amino-acid chain: Acyl carrier protein 3, chloroplastic (132 aa).

A chloroplast-targeting transit peptide spans 1–49 (MASIAGSAVSFAKPVKAINTNSLSFSGARRGNAFLRLQPVPMRFAVCCS). Residues 52 to 127 (QDTVEKVCEI…DAATLIDKLV (76 aa)) form the Carrier domain. Ser-87 is modified (O-(pantetheine 4'-phosphoryl)serine).

Belongs to the acyl carrier protein (ACP) family. 4'-phosphopantetheine is transferred from CoA to a specific serine of apo-ACP by acpS. This modification is essential for activity because fatty acids are bound in thioester linkage to the sulfhydryl of the prosthetic group.

It localises to the plastid. It is found in the chloroplast. The protein operates within lipid metabolism; fatty acid biosynthesis. Carrier of the growing fatty acid chain in fatty acid biosynthesis. In Hordeum vulgare (Barley), this protein is Acyl carrier protein 3, chloroplastic (ACL1.3).